Consider the following 180-residue polypeptide: uncharacterized protein (180 aa).

The interval 138–180 (SVMPVPMPQQNSDNGSTPHIVDSSKSKDKSSNDGDNGVFTGDE) is disordered. Over residues 145–154 (PQQNSDNGST) the composition is skewed to polar residues. The segment covering 159–169 (DSSKSKDKSSN) has biased composition (basic and acidic residues).

This is an uncharacterized protein from Acidianus filamentous virus 2 (isolate Italy/Pozzuoli) (AFV-2).